The chain runs to 249 residues: tRNA (guanine-N(7)-)-methyltransferase (249 aa).

Positions 1–24 are disordered; it reads MHSIPADTGHTPSRAPAGNGSPPA. 4 residues coordinate S-adenosyl-L-methionine: E81, E106, D133, and D156. Residue D156 is part of the active site. Position 160 (K160) interacts with substrate. Positions 162 to 167 are interaction with RNA; sequence RHNKRR. Substrate contacts are provided by residues D192 and 227–230; that span reads TKFE.

This sequence belongs to the class I-like SAM-binding methyltransferase superfamily. TrmB family.

The enzyme catalyses guanosine(46) in tRNA + S-adenosyl-L-methionine = N(7)-methylguanosine(46) in tRNA + S-adenosyl-L-homocysteine. Its pathway is tRNA modification; N(7)-methylguanine-tRNA biosynthesis. In terms of biological role, catalyzes the formation of N(7)-methylguanine at position 46 (m7G46) in tRNA. The sequence is that of tRNA (guanine-N(7)-)-methyltransferase from Paracidovorax citrulli (strain AAC00-1) (Acidovorax citrulli).